The primary structure comprises 112 residues: Nucleoid-associated protein FTH_1374 (112 aa).

Residues 1–27 are disordered; that stretch reads MNFDMSKLMQQAQKMQEQMKKAQQERE. Residues 17-27 show a composition bias toward basic and acidic residues; it reads EQMKKAQQERE.

Belongs to the YbaB/EbfC family. In terms of assembly, homodimer.

It localises to the cytoplasm. Its subcellular location is the nucleoid. Its function is as follows. Binds to DNA and alters its conformation. May be involved in regulation of gene expression, nucleoid organization and DNA protection. This chain is Nucleoid-associated protein FTH_1374, found in Francisella tularensis subsp. holarctica (strain OSU18).